The following is a 436-amino-acid chain: MTFGRSGAASVVLNVGGARYSLSRELLKDFPLRRVSRLHGCRSERDVLEVCDDYDRERNEYFFDRHSEAFGFILLYVRGHGKLRFAPRMCELSFYNEMIYWGLEGAHLEYCCQRRLDDRMSDTYTFYSADEPGVLGRDEARPGGAEAAPSRRWLERMRRTFEEPTSSLAAQILASVSVVFVIVSMVVLCASTLPDWRNAAADNRSLDDRSRYSAGPGREPSGIIEAICIGWFTAECIVRFIVSKNKCEFVKRPLNIIDLLAITPYYISVLMTVFTGENSQLQRAGVTLRVLRMMRIFWVIKLARHFIGLQTLGLTLKRCYREMVMLLVFICVAMAIFSALSQLLEHGLDLETSNKDFTSIPAACWWVIISMTTVGYGDMYPITVPGRILGGVCVVSGIVLLALPITFIYHSFVQCYHELKFRSARYSRSLSTEFLN.

Residues 1-168 lie on the Cytoplasmic side of the membrane; sequence MTFGRSGAAS…RTFEEPTSSL (168 aa). The chain crosses the membrane as a helical span at residues 169 to 190; that stretch reads AAQILASVSVVFVIVSMVVLCA. At 191–220 the chain is on the extracellular side; that stretch reads STLPDWRNAAADNRSLDDRSRYSAGPGREP. The chain crosses the membrane as a helical span at residues 221–242; it reads SGIIEAICIGWFTAECIVRFIV. The Cytoplasmic portion of the chain corresponds to 243–253; the sequence is SKNKCEFVKRP. A helical transmembrane segment spans residues 254-274; the sequence is LNIIDLLAITPYYISVLMTVF. Residues 275–284 lie on the Extracellular side of the membrane; it reads TGENSQLQRA. A helical; Voltage-sensor transmembrane segment spans residues 285–305; it reads GVTLRVLRMMRIFWVIKLARH. Topologically, residues 306–320 are cytoplasmic; the sequence is FIGLQTLGLTLKRCY. The helical transmembrane segment at 321 to 342 threads the bilayer; that stretch reads REMVMLLVFICVAMAIFSALSQ. Residues 343–360 are Extracellular-facing; that stretch reads LLEHGLDLETSNKDFTSI. Residues 361 to 372 constitute an intramembrane region (helical); it reads PAACWWVIISMT. Positions 373 to 378 match the Selectivity filter motif; sequence TVGYGD. An intramembrane segment occupies 373–380; sequence TVGYGDMY. Residues 381-387 lie on the Extracellular side of the membrane; the sequence is PITVPGR. The helical transmembrane segment at 388-416 threads the bilayer; that stretch reads ILGGVCVVSGIVLLALPITFIYHSFVQCY. Over 417 to 436 the chain is Cytoplasmic; it reads HELKFRSARYSRSLSTEFLN.

The protein belongs to the potassium channel family. G (TC 1.A.1.2) subfamily. Kv6.3/KCNG3 sub-subfamily. As to quaternary structure, heterotetramer with KCNB1. Does not form homomultimers. In terms of tissue distribution, expressed in the brain, liver, testis, small intestine, colon, thymus and adrenal gland.

It is found in the cell membrane. Its subcellular location is the cytoplasm. Its function is as follows. Regulatory subunit of the voltage-gated potassium (Kv) channel which, when coassembled with KCNB1, modulates the kinetics parameters of the heterotetrameric channel namely the inactivation and deactivation rate. Potassium channel subunit that does not form functional channels by itself. Reduces the deactivation rate. Moderately accelerates activation. This Homo sapiens (Human) protein is Voltage-gated potassium channel regulatory subunit KCNG3.